We begin with the raw amino-acid sequence, 347 residues long: Dihydroorotase (347 aa).

2 residues coordinate Zn(2+): His13 and His15. Residues 15 to 17 and Asn41 contribute to the substrate site; that span reads HLR. Zn(2+) contacts are provided by Lys99, His136, and His174. Lys99 carries the post-translational modification N6-carboxylysine. Position 136 (His136) interacts with substrate. Leu219 contributes to the substrate binding site. Position 247 (Asp247) interacts with Zn(2+). Asp247 is a catalytic residue. Positions 251 and 263 each coordinate substrate.

Belongs to the metallo-dependent hydrolases superfamily. DHOase family. Class II DHOase subfamily. In terms of assembly, homodimer. Zn(2+) serves as cofactor.

It carries out the reaction (S)-dihydroorotate + H2O = N-carbamoyl-L-aspartate + H(+). It participates in pyrimidine metabolism; UMP biosynthesis via de novo pathway; (S)-dihydroorotate from bicarbonate: step 3/3. In terms of biological role, catalyzes the reversible cyclization of carbamoyl aspartate to dihydroorotate. The polypeptide is Dihydroorotase (Rhizobium meliloti (strain 1021) (Ensifer meliloti)).